A 282-amino-acid polypeptide reads, in one-letter code: MSLTDGNIIEIDNLSFKYARQNKCILKNLTLNIKDGQWIALIGHNGSGKSTLARLIDGLLKAESGSIKVDGYEMNEKNIWDIRKKIGMVFQNPDNQFVGADVESDIAFGLENQGVPREEMVSRVADALKVVGMEKFATHEPARLSGGQKQRVAIAGVLALRPKIIILDEATSMLDPEGRKGLITLIKDLKDEYKFTVISITHDIDEATLADRVIVLDDGKIIDDGKPESIFIKNDELLNIGLDIPFAEKIRRELTKKGVDIPNKYFTEEEMVDWLCQFKQKN.

The 235-residue stretch at 9 to 243 (IEIDNLSFKY…NDELLNIGLD (235 aa)) folds into the ABC transporter domain. 43-50 (GHNGSGKS) provides a ligand contact to ATP.

This sequence belongs to the ABC transporter superfamily. Energy-coupling factor EcfA family. As to quaternary structure, forms a stable energy-coupling factor (ECF) transporter complex composed of 2 membrane-embedded substrate-binding proteins (S component), 2 ATP-binding proteins (A component) and 2 transmembrane proteins (T component).

The protein resides in the cell membrane. ATP-binding (A) component of a common energy-coupling factor (ECF) ABC-transporter complex. Unlike classic ABC transporters this ECF transporter provides the energy necessary to transport a number of different substrates. This chain is Energy-coupling factor transporter ATP-binding protein EcfA1, found in Ligilactobacillus salivarius (strain UCC118) (Lactobacillus salivarius).